The following is a 1505-amino-acid chain: Actin cytoskeleton-regulatory complex protein PAN1 (1505 aa).

The disordered stretch occupies residues 1–30 (MFNSYQATGMGYNPNQQQQQPPPPQQQQQL). The EH 1 domain maps to 85–174 (DQKKFEHLFR…QKWHNEVQSF (90 aa)). An EF-hand 1 domain is found at 118 to 153 (LTPVVLAEIWTLSDIDKTGALLFPEFALSLHLCNMA). 2 stretches are compositionally biased toward polar residues: residues 364–393 (ATGYQQSFNTGGLQANKTGPLQPNHTGYNF) and 403–413 (ATGLQRQPTGV). Disordered regions lie at residues 364-416 (ATGY…VLQQ) and 422-441 (LQQQPTGYLQSQPTGRPGEW). In terms of domain architecture, EH 2 spans 492–581 (EKQIYDRLFQ…PELIPPADKT (90 aa)). The EF-hand 2 domain maps to 525–560 (LGRQDLEAIWTLADTDDVGKLNKNQFAVAMHLIYRR). The span at 588–604 (SLKNSLKNGGAKQTRSK) shows a compositional bias: polar residues. The tract at residues 588 to 620 (SLKNSLKNGGAKQTRSKPMTKPDGSRFKNDDSD) is disordered. The stretch at 677-752 (RTSDREVDAL…LVKLQLKRED (76 aa)) forms a coiled coil. Disordered regions lie at residues 867-927 (EFAR…TYST) and 948-1505 (EKLG…GRVL). Residues 872–885 (ADNTTTARSSSAYA) are compositionally biased toward polar residues. Basic and acidic residues-rich tracts occupy residues 960 to 980 (KAAEKHDEIVSKPSPSREEPP), 1034 to 1050 (SQRENFRENKWDEEKQY), and 1069 to 1079 (SQEHIVKENAK). A compositionally biased stretch (polar residues) spans 1086 to 1096 (QAPTSNYSQQP). Residues 1109-1123 (RATETEQAESKKESE) show a composition bias toward basic and acidic residues. Positions 1133 to 1175 (AAASTEPAQPAQPAQASQASKPAQPAQPANSTEPASASASEQP) are enriched in low complexity. Over residues 1193-1208 (VDTQKISMQRNFQRGT) the composition is skewed to polar residues. Residues 1216 to 1225 (DSEEEDSEDE) are compositionally biased toward acidic residues. The segment covering 1261–1280 (PSKDEKSIGAENASGHESKM) has biased composition (basic and acidic residues). A compositionally biased stretch (polar residues) spans 1283–1319 (ELSSSENTAAGVSQVNETPAQSSYEEPSLQEQSSYES). Low complexity predominate over residues 1321 to 1330 (AVPAAPSLPE). Over residues 1331–1453 (SVPPPAPAPE…SIPPPPPAPP (123 aa)) the composition is skewed to pro residues. Residues 1454 to 1472 (LSSNDSSLASAAAPPAGGA) are compositionally biased toward low complexity. Residues 1474–1491 (NIGALLGQITGGKSLKKV) enclose the WH2 domain.

The protein belongs to the PAN1 family. In terms of assembly, component of the PAN1 actin cytoskeleton-regulatory complex.

The protein localises to the cell membrane. It localises to the endosome membrane. The protein resides in the cytoplasm. It is found in the cytoskeleton. Its subcellular location is the actin patch. Functionally, component of the PAN1 actin cytoskeleton-regulatory complex required for the internalization of endosomes during actin-coupled endocytosis. The complex links the site of endocytosis to the cell membrane-associated actin cytoskeleton. Mediates uptake of external molecules and vacuolar degradation of plasma membrane proteins. Plays a role in the proper organization of the cell membrane-associated actin cytoskeleton and promotes its destabilization. The chain is Actin cytoskeleton-regulatory complex protein PAN1 (PAN1) from Lodderomyces elongisporus (strain ATCC 11503 / CBS 2605 / JCM 1781 / NBRC 1676 / NRRL YB-4239) (Yeast).